Here is a 768-residue protein sequence, read N- to C-terminus: Mitochondrial 15S rRNA processing factor CCM1 (768 aa).

Residues 1-90 (MIRLIRWNNV…RSFTKVIAQH (90 aa)) constitute a mitochondrion transit peptide. 2 disordered regions span residues 28 to 65 (NKRK…NTGS) and 90 to 114 (HLKP…LPPI). A compositionally biased stretch (basic and acidic residues) spans 43 to 53 (NRKDGDIEPYR). A compositionally biased stretch (polar residues) spans 55 to 65 (TDQNQTPNTGS). 5 PPR repeats span residues 274-308 (KIDH…NIEI), 309-344 (SKMI…SQKT), 347-381 (DEKV…GMNV), 382-417 (NQNL…GWVP), and 418-452 (NLQT…NSVT). The segment covering 583 to 596 (IEPRQDEPTEKATT) has biased composition (basic and acidic residues). The segment at 583–609 (IEPRQDEPTEKATTTEEQNASSETDNN) is disordered. Positions 597–609 (TEEQNASSETDNN) are enriched in polar residues. One copy of the PPR 6 repeat lies at 634–664 (DSYLYNLAIKAAGKFKNYGFAQEILHERGQF).

This sequence belongs to the CCM1 family. In terms of assembly, binds to mitochondrial small subunit 15S rRNA.

It localises to the mitochondrion. Its function is as follows. Regulates mitochondrial small subunit maturation by controlling 15S rRNA 5'-end processing. Localizes to the 5' precursor of the 15S rRNA in a position that is subsequently occupied by mS47 in the mature yeast mtSSU. Uses structure and sequence-specific RNA recognition, binding to a single-stranded region of the precursor and specifically recognizing bases -6 to -1. The exchange of Ccm1 for mS47 is coupled to the irreversible removal of precursor rRNA that is accompanied by conformational changes of the mitoribosomal proteins uS5m and mS26. These conformational changes signal completion of 5'-end rRNA processing through protection of the mature 5'-end of the 15S rRNA and stabilization of mS47. The removal of the 5' precursor together with the dissociation of Ccm1 may be catalyzed by the 5'-3' exoribonuclease Pet127. Involved in the specific removal of group I introns in mitochondrial encoded transcripts. In Candida albicans (strain SC5314 / ATCC MYA-2876) (Yeast), this protein is Mitochondrial 15S rRNA processing factor CCM1 (CCM1).